The following is a 584-amino-acid chain: Delta 8-(E)-sphingolipid desaturase (584 aa).

Positions 7–82 (KKIFTRSQII…FTRFKIGEIE (76 aa)) constitute a Cytochrome b5 heme-binding domain. Positions 42 and 65 each coordinate heme. The segment at 109–134 (NKNTSNKKTLDSKLDNDSSNSTSDLE) is disordered. Residues 261–281 (LFLYSLSFLKINQLFLSAVFM) form a helical membrane-spanning segment. The Histidine box-1 motif lies at 293–297 (HDAGH). Residues 306-326 (IDNIFGMLIADWFGGLSLGWW) form a helical membrane-spanning segment. Residues 330–334 (HNVHH) carry the Histidine box-2 motif. 3 helical membrane-spanning segments follow: residues 386–403 (YLYYPILCFGRFNLYRLS), 423–443 (YFEFFGLSFFFYWFFYLLVFK), and 455–475 (VMVSHITTMLVHVQITLSHFA). The Histidine box-3 motif lies at 514-518 (QAIHH).

Belongs to the fatty acid desaturase type 1 family.

It is found in the membrane. The catalysed reaction is an N-acylsphing-4-enine + 2 Fe(II)-[cytochrome b5] + O2 + 2 H(+) = a (4E,8E)-4-sphinga-4,8-dienine ceramide + 2 Fe(III)-[cytochrome b5] + 2 H2O. Its pathway is lipid metabolism; sphingolipid metabolism. Delta(8)-fatty-acid desaturase which introduces a double bond at the 8-position in the long-chain base (LCB) of ceramides. Required for the formation of the di-unsaturated sphingoid base (E,E)-sphinga-4,8-dienine during glucosylceramide (GluCer) biosynthesis. This chain is Delta 8-(E)-sphingolipid desaturase, found in Candida albicans (strain SC5314 / ATCC MYA-2876) (Yeast).